The sequence spans 363 residues: Phospho-N-acetylmuramoyl-pentapeptide-transferase (363 aa).

A run of 11 helical transmembrane segments spans residues 27-47 (AGAA…PLIA), 76-96 (TMGG…WADL), 97-117 (TDGY…VGFA), 137-157 (LGCE…LMPA), 171-191 (WLLP…TGFG), 202-222 (GLAI…SYLV), 226-246 (VFAD…CVFC), 248-268 (ALVG…AVFM), 271-291 (TGSL…KHEL), 292-312 (VLCI…IQVF), and 340-360 (KIVI…LATL).

It belongs to the glycosyltransferase 4 family. MraY subfamily. It depends on Mg(2+) as a cofactor.

The protein resides in the cell inner membrane. The enzyme catalyses UDP-N-acetyl-alpha-D-muramoyl-L-alanyl-gamma-D-glutamyl-meso-2,6-diaminopimeloyl-D-alanyl-D-alanine + di-trans,octa-cis-undecaprenyl phosphate = di-trans,octa-cis-undecaprenyl diphospho-N-acetyl-alpha-D-muramoyl-L-alanyl-D-glutamyl-meso-2,6-diaminopimeloyl-D-alanyl-D-alanine + UMP. Its pathway is cell wall biogenesis; peptidoglycan biosynthesis. Catalyzes the initial step of the lipid cycle reactions in the biosynthesis of the cell wall peptidoglycan: transfers peptidoglycan precursor phospho-MurNAc-pentapeptide from UDP-MurNAc-pentapeptide onto the lipid carrier undecaprenyl phosphate, yielding undecaprenyl-pyrophosphoryl-MurNAc-pentapeptide, known as lipid I. The polypeptide is Phospho-N-acetylmuramoyl-pentapeptide-transferase (Gluconacetobacter diazotrophicus (strain ATCC 49037 / DSM 5601 / CCUG 37298 / CIP 103539 / LMG 7603 / PAl5)).